Consider the following 551-residue polypeptide: Interleukin-2 receptor subunit beta (551 aa).

The signal sequence occupies residues 1–26 (MAAPALSWRLPLLILLLPLATPWASA). Residues 27–240 (TVNGTSQFTC…TKPASLGKDT (214 aa)) are Extracellular-facing. Residues N29, N43, and N71 are each glycosylated (N-linked (GlcNAc...) asparagine). Cysteines 36 and 46 form a disulfide. A disulfide bond links C74 and C86. In terms of domain architecture, Fibronectin type-III spans 134–234 (APISLQVVHV…QPLAFRTKPA (101 aa)). The N-linked (GlcNAc...) asparagine glycan is linked to N149. A WSXWS motif motif is present at residues 220–224 (WSPWS). Residues 241–265 (IPWLGHLLVGLSGAFGFIILVYLLI) traverse the membrane as a helical segment. Residues 266 to 551 (NCRNTGPWLK…LQGQDPTHLV (286 aa)) are Cytoplasmic-facing. The Box 1 motif motif lies at 278–286 (LKCHTPDPS). Disordered stretches follow at residues 393–412 (DEGV…QPLS) and 433–476 (SLLG…GPPT).

Belongs to the type I cytokine receptor family. Type 4 subfamily. Non-covalent dimer of an alpha and a beta subunit. IL2R exists in 3 different forms: a high affinity dimer, an intermediate affinity monomer (beta subunit), and a low affinity monomer (alpha subunit). The high and intermediate affinity forms also associate with a gamma subunit. Interacts with SHB upon interleukin stimulation.

It is found in the cell membrane. The protein localises to the cell surface. In terms of biological role, receptor for interleukin-2. This beta subunit is involved in receptor mediated endocytosis and transduces the mitogenic signals of IL2. Probably in association with IL15RA, involved in the stimulation of neutrophil phagocytosis by IL15. This is Interleukin-2 receptor subunit beta (IL2RB) from Pan troglodytes (Chimpanzee).